A 1450-amino-acid chain; its full sequence is MIELLKEDDAPKKIGHIQFGLLSEDDIVRLSHVQIVNRELFDLVKRKPTPYGVLDNKLGTSDKQAMCTTCGLSIVDCVGHFGYIKLQLPVFHIGYLKNIMNILQMICKSCSTILLNEEKKQYYLRKMRNKKMDNLQRKSLLKKIFLECRKTKECLKCGSTNGMIKKSGAFKIIHEKYKGKTESLQDYYALYDDAIKYNPEMKSHIKKAQDDLNPLVALNLFKKISYQDIEIMNMDPVIGRPERLILTYMLVPPVSIRPSVPMDGGSGTNEDDLTMKLSEILHINEHIRSNVDRAEMSAIMEDWDYLQASCAIYINSDVPGLPLQMKPTKAVRGLSQRLKGKTGRFRGNLSGKRVDFSGRTVISPDPNLNIDEVAVPQLIALTMTYPERVTDYNIERLQKYVINGPDRHPGANYIIYADGVKKWLKFGNREKFAAELKIGDIVERHIIDGDIMLFNRQPSLHKLSIMSHKARVMPWRTLRFNECVCTPYNADFDGDEMNIHLPQTEEARAEATILMGVTNNLITPRNGEPLVAATQDFLTASYLISRRDAFYERYRFALMCTHFADANEHIDLPPPAILKPVELWTGKQIFEVLLRPSVKSHVLCNFETRSRTYSKNLYMCPKDGYVYFRNSELMCGSIDKSIIGGGNKNSLFHILMRDFSPTIAANCMTRLAKLCARFLGDQGFSIGIPDIKPAEDLDRKKREIIETAYKKCAVFLKDYESGSLQLSSGCSMEQTFEAKMNQTLSQIRDDCGKLCVNDLPNYNSPLIMGLCGSKGSNINIAQMICCVGQQIVNGTRIPNGFTNRTTPHFKHFAKNPKSKGFVSNSFYTGMIPTEFFFHTMGGREGLVDTAVKTAETGYMQRRLMKALEDLSTHYDYTVRDSIGGIVQFIYGDDGLDPAGMEAKDRPVDFLRAMMSVKSTRQCRNEPEMKPFEIRKLVESIIDSSKFEACTDLFKNEIRVFFNGNEKTKGYIQELISLRKQFKLSSFDLNDNEDEIIIEDNSPMDISTTTTTTTTTTTNNAVKITNITTDIEMNESNKEENDKIEKERIEKEKESKRLKLLGERFANEHVVNQIHRITKTQIELFLDICLDKYSRARIEPGTAVGAIGAQSIGEPGTQMTLKTFHFAGVASMNVTLGVPRIKEIINAAKNISTPIITASLNCDYDIRSARIVAGRIEKTTLGHVATHIKEVVKRAGCYLSIKIDKNFVDSLQLEINSKTISQSIASTKGLKLKPEQITTNGDYKLRIVPPANIREGSLYYLQFLKNNLPAVIVKGIPTVNRVVISKVDEKQERYQLLVEGYDLRAVMATPGIKGTHTTSNHIMECENTLGIETARNTIMSEIDMIMTSHGMSIDIRHVMLLADLMSFKGEILGITRFGIAKMKESVLMLASFEKTTDHLFDAAVHHRQDDIVGVSECIIMGVVIPLGTGLFKLLRKSNKNNLPKKSLLLQD.

Residues cysteine 67, cysteine 70, cysteine 77, histidine 80, cysteine 107, cysteine 110, and cysteine 154 each coordinate Zn(2+). Residues aspartate 491, aspartate 493, and aspartate 495 each contribute to the Mg(2+) site. A bridging helix region spans residues 832–844 (PTEFFFHTMGGRE).

This sequence belongs to the RNA polymerase beta' chain family. As to quaternary structure, component of the RNA polymerase III (Pol III) complex consisting of 17 subunits.

It is found in the nucleus. It carries out the reaction RNA(n) + a ribonucleoside 5'-triphosphate = RNA(n+1) + diphosphate. Its function is as follows. DNA-dependent RNA polymerase catalyzes the transcription of DNA into RNA using the four ribonucleoside triphosphates as substrates. Largest and catalytic core component of RNA polymerase III which synthesizes small RNAs, such as 5S rRNA and tRNAs. Forms the polymerase active center together with the second largest subunit. A single-stranded DNA template strand of the promoter is positioned within the central active site cleft of Pol III. A bridging helix emanates from RPC1 and crosses the cleft near the catalytic site and is thought to promote translocation of Pol III by acting as a ratchet that moves the RNA-DNA hybrid through the active site by switching from straight to bent conformations at each step of nucleotide addition. This chain is DNA-directed RNA polymerase III subunit rpc1 (polr3a), found in Dictyostelium discoideum (Social amoeba).